A 135-amino-acid polypeptide reads, in one-letter code: Dihydromethanopterin reductase (135 aa).

Residues A9, 16–21 (LGLNGH), 52–54 (PKT), and 93–97 (GGIAV) contribute to the NADP(+) site.

In terms of assembly, homodimer.

It carries out the reaction 5,6,7,8-tetrahydromethanopterin + NAD(+) = 7,8-dihydromethanopterin + NADH + H(+). The catalysed reaction is 5,6,7,8-tetrahydromethanopterin + NADP(+) = 7,8-dihydromethanopterin + NADPH + H(+). It functions in the pathway cofactor biosynthesis; 5,6,7,8-tetrahydromethanopterin biosynthesis. Functionally, catalyzes the reduction of dihydromethanopterin (H(2)MPT) to tetrahydromethanopterin (H(4)MPT). Shows preference for NADPH rather than NADH as electron donor. Does not reduce dihydrofolate. The polypeptide is Dihydromethanopterin reductase (dmrA) (Methylorubrum extorquens (strain ATCC 14718 / DSM 1338 / JCM 2805 / NCIMB 9133 / AM1) (Methylobacterium extorquens)).